We begin with the raw amino-acid sequence, 399 residues long: Elongation factor Tu (399 aa).

Positions 10–204 (KPHVNIGTIG…AVDEAIPEPE (195 aa)) constitute a tr-type G domain. Residues 19–26 (GHVDHGKT) form a G1 region. A GTP-binding site is contributed by 19 to 26 (GHVDHGKT). Residue Thr-26 coordinates Mg(2+). The segment at 60–64 (GITIN) is G2. The tract at residues 81–84 (DCPG) is G3. Residues 81 to 85 (DCPGH) and 136 to 139 (NKCD) each bind GTP. Residues 136-139 (NKCD) form a G4 region. The segment at 174-176 (SGL) is G5.

Belongs to the TRAFAC class translation factor GTPase superfamily. Classic translation factor GTPase family. EF-Tu/EF-1A subfamily. As to quaternary structure, monomer.

The protein resides in the cytoplasm. It carries out the reaction GTP + H2O = GDP + phosphate + H(+). Its function is as follows. GTP hydrolase that promotes the GTP-dependent binding of aminoacyl-tRNA to the A-site of ribosomes during protein biosynthesis. This chain is Elongation factor Tu, found in Parasynechococcus marenigrum (strain WH8102).